An 842-amino-acid polypeptide reads, in one-letter code: Elongation factor 2 (842 aa).

Residues 17-253 (TNVRNMSVIA…LWGDSYFNPK (237 aa)) enclose the tr-type G domain. Residues 26-33 (AHVDHGKS), 158-161 (NKVD), and 213-215 (SGL) each bind GTP. A Diphthamide modification is found at His-699.

It belongs to the TRAFAC class translation factor GTPase superfamily. Classic translation factor GTPase family. EF-G/EF-2 subfamily.

The protein resides in the cytoplasm. It carries out the reaction GTP + H2O = GDP + phosphate + H(+). Its function is as follows. Catalyzes the GTP-dependent ribosomal translocation step during translation elongation. During this step, the ribosome changes from the pre-translocational (PRE) to the post-translocational (POST) state as the newly formed A-site-bound peptidyl-tRNA and P-site-bound deacylated tRNA move to the P and E sites, respectively. Catalyzes the coordinated movement of the two tRNA molecules, the mRNA and conformational changes in the ribosome. The chain is Elongation factor 2 (EFT1) from Komagataella pastoris (Yeast).